The sequence spans 325 residues: DNA repair and recombination protein RadA (325 aa).

107–114 (GEFGSGKT) serves as a coordination point for ATP.

It belongs to the eukaryotic RecA-like protein family.

Functionally, involved in DNA repair and in homologous recombination. Binds and assemble on single-stranded DNA to form a nucleoprotein filament. Hydrolyzes ATP in a ssDNA-dependent manner and promotes DNA strand exchange between homologous DNA molecules. This is DNA repair and recombination protein RadA from Methanosarcina acetivorans (strain ATCC 35395 / DSM 2834 / JCM 12185 / C2A).